The sequence spans 496 residues: Cytochrome c-552 (496 aa).

The signal sequence occupies residues 1–23 (MKKYKFLFAISIIAIGLMTVLLA). His100 serves as a coordination point for heme c. Positions 128, 131, and 132 each coordinate heme. 6 residues coordinate heme c: Cys166, Cys169, His170, Cys210, Cys213, and His214. Residues Glu216, Tyr217, Lys269, and Gln271 each coordinate Ca(2+). Position 217 (Tyr217) interacts with substrate. His272 is a substrate binding site. Positions 283, 290, 293, 294, 308, 321, 324, 325, and 400 each coordinate heme c.

The protein belongs to the cytochrome c-552 family. Ca(2+) serves as cofactor. The cofactor is heme c.

The protein resides in the periplasm. It carries out the reaction 6 Fe(III)-[cytochrome c] + NH4(+) + 2 H2O = 6 Fe(II)-[cytochrome c] + nitrite + 8 H(+). It functions in the pathway nitrogen metabolism; nitrate reduction (assimilation). In terms of biological role, catalyzes the reduction of nitrite to ammonia, consuming six electrons in the process. The sequence is that of Cytochrome c-552 from Aliarcobacter butzleri (strain RM4018) (Arcobacter butzleri).